The chain runs to 143 residues: Flagellar assembly factor FliW (143 aa).

The protein belongs to the FliW family. Interacts with translational regulator CsrA and flagellin(s).

The protein localises to the cytoplasm. Its function is as follows. Acts as an anti-CsrA protein, binds CsrA and prevents it from repressing translation of its target genes, one of which is flagellin. Binds to flagellin and participates in the assembly of the flagellum. This Clostridium botulinum (strain Langeland / NCTC 10281 / Type F) protein is Flagellar assembly factor FliW.